A 410-amino-acid chain; its full sequence is Cysteine desulfurase IscS (410 aa).

Pyridoxal 5'-phosphate contacts are provided by residues 80 to 81 (AT), Asn160, Gln188, and 208 to 210 (SGH). Lys211 carries the post-translational modification N6-(pyridoxal phosphate)lysine. Thr248 contributes to the pyridoxal 5'-phosphate binding site. Catalysis depends on Cys334, which acts as the Cysteine persulfide intermediate. [2Fe-2S] cluster is bound at residue Cys334.

This sequence belongs to the class-V pyridoxal-phosphate-dependent aminotransferase family. NifS/IscS subfamily. In terms of assembly, homodimer. Forms a heterotetramer with IscU, interacts with other sulfur acceptors. Pyridoxal 5'-phosphate serves as cofactor.

It localises to the cytoplasm. The enzyme catalyses (sulfur carrier)-H + L-cysteine = (sulfur carrier)-SH + L-alanine. It participates in cofactor biosynthesis; iron-sulfur cluster biosynthesis. Functionally, master enzyme that delivers sulfur to a number of partners involved in Fe-S cluster assembly, tRNA modification or cofactor biosynthesis. Catalyzes the removal of elemental sulfur atoms from cysteine to produce alanine. Functions as a sulfur delivery protein for Fe-S cluster synthesis onto IscU, an Fe-S scaffold assembly protein, as well as other S acceptor proteins. In Rickettsia massiliae (strain Mtu5), this protein is Cysteine desulfurase IscS.